The following is a 300-amino-acid chain: MASRSPSSSPDSATGSGTDPARPDTGEPLGGGSDSDSDFGLGKFDCSAGDASARLEGADLENEFESAADRVRDLVQTASREQLLYLYARFKQVKVGKCNTSKPGFFDFEGQRKWSAWKQLGDMSAEQAMQEYVTCVHALDPEGSQKSSERRGGEKRTGFGGPAVSSLYQEEKIREEDKNIFDYCRENNIEHVSKAISSKTVDVNTRDEEGRALLHWACDRGHKDLVSLLLQNNADINSQDDEGQTALHYASACEFAEIVELLLKAGADPSIKDQEGSLPEEVTESSAISSLLRQYTAPKG.

Low complexity predominate over residues 1 to 19 (MASRSPSSSPDSATGSGTD). The interval 1-43 (MASRSPSSSPDSATGSGTDPARPDTGEPLGGGSDSDSDFGLGK) is disordered. An ACB domain is found at 60 to 145 (LENEFESAAD…VHALDPEGSQ (86 aa)). An acyl-CoA-binding positions include 87-91 (YARFK), Lys-113, and Tyr-132. The tract at residues 142-162 (EGSQKSSERRGGEKRTGFGGP) is disordered. The segment covering 147 to 157 (SSERRGGEKRT) has biased composition (basic and acidic residues). ANK repeat units follow at residues 209 to 238 (EGRA…DINS) and 242 to 271 (EGQT…DPSI). The tract at residues 270–300 (SIKDQEGSLPEEVTESSAISSLLRQYTAPKG) is disordered. A compositionally biased stretch (polar residues) spans 284–293 (ESSAISSLLR).

As to expression, higly expressed in the central nervous system, developing eyes, otic vesicle, and trunk muscles.

It localises to the cytoplasm. It is found in the nucleus. In terms of biological role, binds long-chain acyl-coenzyme A molecules with a strong preference for unsaturated C18:1-CoA. Does not bind fatty acids. Plays a role in protein N-myristoylation. This chain is Acyl-CoA-binding domain-containing protein 6 (acbd6), found in Danio rerio (Zebrafish).